The primary structure comprises 90 residues: Putative regulatory protein Cbei_1140 (90 aa).

This sequence belongs to the RemA family.

The sequence is that of Putative regulatory protein Cbei_1140 from Clostridium beijerinckii (strain ATCC 51743 / NCIMB 8052) (Clostridium acetobutylicum).